The primary structure comprises 167 residues: Mediator of RNA polymerase II transcription subunit 10 (167 aa).

Over residues 141–158 the composition is skewed to gly residues; it reads TGGRTVGGEGEGAGQGEG. The interval 141–167 is disordered; sequence TGGRTVGGEGEGAGQGEGGEGRGEGGN.

The protein belongs to the Mediator complex subunit 10 family. In terms of assembly, component of the Mediator complex.

The protein localises to the nucleus. Component of the Mediator complex, a coactivator involved in the regulated transcription of nearly all RNA polymerase II-dependent genes. Mediator functions as a bridge to convey information from gene-specific regulatory proteins to the basal RNA polymerase II transcription machinery. Mediator is recruited to promoters by direct interactions with regulatory proteins and serves as a scaffold for the assembly of a functional preinitiation complex with RNA polymerase II and the general transcription factors. This is Mediator of RNA polymerase II transcription subunit 10 (NUT2) from Chaetomium globosum (strain ATCC 6205 / CBS 148.51 / DSM 1962 / NBRC 6347 / NRRL 1970) (Soil fungus).